Consider the following 860-residue polypeptide: Leucine--tRNA ligase (860 aa).

A 'HIGH' region motif is present at residues 42-52; the sequence is PYPSGRLHMGH. The 'KMSKS' region motif lies at 619-623; sequence KMSKS. K622 is an ATP binding site.

The protein belongs to the class-I aminoacyl-tRNA synthetase family.

Its subcellular location is the cytoplasm. The enzyme catalyses tRNA(Leu) + L-leucine + ATP = L-leucyl-tRNA(Leu) + AMP + diphosphate. The polypeptide is Leucine--tRNA ligase (Pasteurella multocida (strain Pm70)).